Consider the following 552-residue polypeptide: Hyaluronan synthase 2 (552 aa).

Residues 1–11 (MHCERFLCVLR) are Cytoplasmic-facing. The helical transmembrane segment at 12 to 32 (IIGTTLFGVSLLLGITAAYIV) threads the bilayer. Residues 33–45 (GYQFIQTDNYYFS) are Extracellular-facing. The chain crosses the membrane as a helical span at residues 46–66 (FGLYGAFLASHLIIQSLFAFL). Over 67 to 374 (EHRKMKKSLE…NAMWFHKHHL (308 aa)) the chain is Cytoplasmic. At Thr110 the chain carries Phosphothreonine. Lys190 participates in a covalent cross-link: Glycyl lysine isopeptide (Lys-Gly) (interchain with G-Cter in ubiquitin). O-linked (GlcNAc) serine glycosylation occurs at Ser221. Position 328 is a phosphothreonine (Thr328). A helical transmembrane segment spans residues 375-395 (WMTYEAVITGFFPFFLIATVI). At 396-402 (QLFYRGK) the chain is on the extracellular side. The helical transmembrane segment at 403-423 (IWNILLFLLTVQLVGLIKSSF) threads the bilayer. The Cytoplasmic segment spans residues 424–429 (ASCLRG). A helical membrane pass occupies residues 430 to 450 (NIVMVFMSLYSVLYMSSLLPA). Topologically, residues 451–475 (KMFAIATINKAGWGTSGRKTIVVNF) are extracellular. The chain crosses the membrane as a helical span at residues 476 to 496 (IGLIPVSVWFTILLGGVIFTI). The Cytoplasmic portion of the chain corresponds to 497–510 (YKESKKPFSESKQT). A helical transmembrane segment spans residues 511 to 531 (VLIVGTLIYACYWVMLLTLYV). At 532-552 (VLINKCGRRKKGQQYDMVLDV) the chain is on the extracellular side.

Belongs to the NodC/HAS family. In terms of assembly, homodimer; dimerization promotes enzymatic activity. Forms heterodimer with HAS3. Forms heterodimer with HAS1. The cofactor is Mg(2+). Phosphorylation at Thr-328 is essential for hyaluronan synthase activity. In terms of processing, O-GlcNAcylation at Ser-221 increases the stability of HAS2 and plasma membrane localization. Post-translationally, ubiquitination at Lys-190; this ubiquitination is essential for hyaluronan synthase activity and homo- or hetero-oligomerization. Can also be poly-ubiquitinated. Deubiquitinated by USP17L22/USP17 and USP4. USP17L22/USP17 efficiently removes 'Lys-63'- and 'Lys-48'-linked polyubiquitin chains, whereas USP4 preferentially removes monoubiquitination and, partially, both 'Lys-63'- and 'Lys-48'-linked polyubiquitin chain. In terms of tissue distribution, expressed in heart, brain, spleen, lung and skeletal muscle.

It is found in the cell membrane. It localises to the endoplasmic reticulum membrane. The protein resides in the vesicle. The protein localises to the golgi apparatus membrane. Its subcellular location is the lysosome. The catalysed reaction is [hyaluronan](n) + UDP-N-acetyl-alpha-D-glucosamine = N-acetyl-beta-D-glucosaminyl-(1-&gt;4)-[hyaluronan](n) + UDP + H(+). The enzyme catalyses N-acetyl-beta-D-glucosaminyl-(1-&gt;4)-[hyaluronan](n) + UDP-alpha-D-glucuronate = [hyaluronan](n+1) + UDP + H(+). The protein operates within glycan biosynthesis; hyaluronan biosynthesis. Catalyzes the addition of GlcNAc or GlcUA monosaccharides to the nascent hyaluronan polymer. Therefore, it is essential to hyaluronan synthesis a major component of most extracellular matrices that has a structural role in tissues architectures and regulates cell adhesion, migration and differentiation. This is one of the isozymes catalyzing that reaction and it is particularly responsible for the synthesis of high molecular mass hyaluronan. Required for the transition of endocardial cushion cells into mesenchymal cells, a process crucial for heart development. May also play a role in vasculogenesis. High molecular mass hyaluronan also play a role in early contact inhibition a process which stops cell growth when cells come into contact with each other or the extracellular matrix. In terms of biological role, catalyzes the addition of GlcNAc or GlcUA monosaccharides to the nascent hyaluronan polymer. Therefore, it is essential to hyaluronan synthesis a major component of most extracellular matrices that has a structural role in tissues architectures and regulates cell adhesion, migration and differentiation. This is one of three isoenzymes responsible for cellular hyaluronan synthesis and it is particularly responsible for the synthesis of high molecular mass hyaluronan. The chain is Hyaluronan synthase 2 from Mus musculus (Mouse).